The following is a 92-amino-acid chain: SPbeta prophage-derived DNA-binding protein HU 2 (92 aa).

At Thr-4 the chain carries Phosphothreonine. The segment at 55–77 is disordered; sequence RAARKGRNPQTGEEIDIPATKAP.

The protein belongs to the bacterial histone-like protein family. Homodimer.

Its function is as follows. Histone-like DNA-binding protein which is capable of wrapping DNA to stabilize it, and thus to prevent its denaturation under extreme environmental conditions. This Bacillus subtilis (strain 168) protein is SPbeta prophage-derived DNA-binding protein HU 2 (hup2).